Reading from the N-terminus, the 121-residue chain is Large ribosomal subunit protein bL12 (121 aa).

It belongs to the bacterial ribosomal protein bL12 family. Homodimer. Part of the ribosomal stalk of the 50S ribosomal subunit. Forms a multimeric L10(L12)X complex, where L10 forms an elongated spine to which 2 to 4 L12 dimers bind in a sequential fashion. Binds GTP-bound translation factors.

In terms of biological role, forms part of the ribosomal stalk which helps the ribosome interact with GTP-bound translation factors. Is thus essential for accurate translation. The chain is Large ribosomal subunit protein bL12 from Streptococcus pyogenes serotype M3 (strain ATCC BAA-595 / MGAS315).